Here is a 342-residue protein sequence, read N- to C-terminus: Dihydroorotase (342 aa).

The Zn(2+) site is built by H13 and H15. Residues H15–R17 and N41 contribute to the substrate site. Residues K97, H134, and H172 each contribute to the Zn(2+) site. K97 carries the post-translational modification N6-carboxylysine. H134 is a substrate binding site. L217 provides a ligand contact to substrate. Residue D245 coordinates Zn(2+). Residue D245 is part of the active site. The substrate site is built by H249 and A261.

Belongs to the metallo-dependent hydrolases superfamily. DHOase family. Class II DHOase subfamily. Homodimer. It depends on Zn(2+) as a cofactor.

The catalysed reaction is (S)-dihydroorotate + H2O = N-carbamoyl-L-aspartate + H(+). Its pathway is pyrimidine metabolism; UMP biosynthesis via de novo pathway; (S)-dihydroorotate from bicarbonate: step 3/3. Its function is as follows. Catalyzes the reversible cyclization of carbamoyl aspartate to dihydroorotate. The chain is Dihydroorotase from Shewanella loihica (strain ATCC BAA-1088 / PV-4).